The sequence spans 485 residues: Putative E3 ubiquitin-protein ligase makorin-4 (485 aa).

A compositionally biased stretch (low complexity) spans 1–32 (MAEAAAPGTTVTTSGAGAAAAEAAETAEAVSP). The disordered stretch occupies residues 1-63 (MAEAAAPGTT…GSDGSGGRGD (63 aa)). The segment covering 45–63 (AGGGVGGSDGSDGSGGRGD) has biased composition (gly residues). C3H1-type zinc fingers lie at residues 90-117 (WTKQ…HDLS), 124-146 (VCKY…HSKP), and 243-270 (ETKK…HGDL). The tract at residues 271-298 (CDMCGLQVLHPMDAAQRSQHIQACIEAH) is makorin-type Cys-His. The segment at 316–370 (CGICMEVVYEKANPNEHRFGILSNCNHTFCLKCIRKWRSAKEFESRIVKSCPQCR) adopts an RING-type zinc-finger fold. Residues 399 to 428 (AMSNKACKYFDEGRGSCPFGENCFYKHMYP) form a C3H1-type 4 zinc finger.

It catalyses the reaction S-ubiquitinyl-[E2 ubiquitin-conjugating enzyme]-L-cysteine + [acceptor protein]-L-lysine = [E2 ubiquitin-conjugating enzyme]-L-cysteine + N(6)-ubiquitinyl-[acceptor protein]-L-lysine.. It participates in protein modification; protein ubiquitination. In terms of biological role, may act as a E3 ubiquitin ligase catalyzing the covalent attachment of ubiquitin moieties onto substrate proteins. The protein is Putative E3 ubiquitin-protein ligase makorin-4 (MKRN4P) of Homo sapiens (Human).